The sequence spans 392 residues: Stilbene synthase 1 (392 aa).

55-58 (KFNR) provides a ligand contact to substrate. Cysteine 164 is a catalytic residue. Substrate-binding positions include leucine 267 and 305-307 (GGP).

This sequence belongs to the thiolase-like superfamily. Chalcone/stilbene synthases family. Homodimer. As to expression, in leaves, expressed in palisade and spongy parenchyma cells and, to a lesser extent, in epidermal cells after induction.

It is found in the cytoplasm. The enzyme catalyses 4-coumaroyl-CoA + 3 malonyl-CoA + 3 H(+) = trans-resveratrol + 4 CO2 + 4 CoA. The protein operates within phytoalexin biosynthesis; 3,4',5-trihydroxystilbene biosynthesis; 3,4',5-trihydroxystilbene from trans-4-coumarate: step 2/2. Its function is as follows. Mediates resistance to pathogens which are sensitive to stilbenes such as Botrytis cinerea, Eutypa lata and Plasmopora viticola by enhancing the production of phytoalexins. Confers resistance to Phytophthora palmivora when expressed in papaya. The polypeptide is Stilbene synthase 1 (VINST1) (Vitis vinifera (Grape)).